Here is a 98-residue protein sequence, read N- to C-terminus: NADH-ubiquinone oxidoreductase chain 4L (98 aa).

3 helical membrane-spanning segments follow: residues 1–21 (MSPI…GMLV), 26–46 (LMAS…TIAL), and 61–81 (ITLL…LVSI).

It belongs to the complex I subunit 4L family. As to quaternary structure, core subunit of respiratory chain NADH dehydrogenase (Complex I) which is composed of 45 different subunits.

The protein localises to the mitochondrion inner membrane. The enzyme catalyses a ubiquinone + NADH + 5 H(+)(in) = a ubiquinol + NAD(+) + 4 H(+)(out). In terms of biological role, core subunit of the mitochondrial membrane respiratory chain NADH dehydrogenase (Complex I) which catalyzes electron transfer from NADH through the respiratory chain, using ubiquinone as an electron acceptor. Part of the enzyme membrane arm which is embedded in the lipid bilayer and involved in proton translocation. The chain is NADH-ubiquinone oxidoreductase chain 4L (MT-ND4L) from Chlorocebus aethiops (Green monkey).